A 542-amino-acid chain; its full sequence is Glucose-6-phosphate isomerase 2 (542 aa).

Glu-353 acts as the Proton donor in catalysis. Catalysis depends on residues His-384 and Lys-505.

This sequence belongs to the GPI family.

It localises to the cytoplasm. It carries out the reaction alpha-D-glucose 6-phosphate = beta-D-fructose 6-phosphate. It participates in carbohydrate biosynthesis; gluconeogenesis. Its pathway is carbohydrate degradation; glycolysis; D-glyceraldehyde 3-phosphate and glycerone phosphate from D-glucose: step 2/4. In terms of biological role, catalyzes the reversible isomerization of glucose-6-phosphate to fructose-6-phosphate. This chain is Glucose-6-phosphate isomerase 2, found in Cupriavidus pinatubonensis (strain JMP 134 / LMG 1197) (Cupriavidus necator (strain JMP 134)).